We begin with the raw amino-acid sequence, 278 residues long: Dermonecrotic toxin LlSicTox-alphaIII3ii (278 aa).

His5 is an active-site residue. Mg(2+) is bound by residues Glu25 and Asp27. Residue His40 is the Nucleophile of the active site. Cysteines 44 and 50 form a disulfide. Asp84 serves as a coordination point for Mg(2+).

This sequence belongs to the arthropod phospholipase D family. Class I subfamily. Requires Mg(2+) as cofactor. As to expression, expressed by the venom gland.

It is found in the secreted. It catalyses the reaction an N-(acyl)-sphingosylphosphocholine = an N-(acyl)-sphingosyl-1,3-cyclic phosphate + choline. It carries out the reaction an N-(acyl)-sphingosylphosphoethanolamine = an N-(acyl)-sphingosyl-1,3-cyclic phosphate + ethanolamine. The enzyme catalyses a 1-acyl-sn-glycero-3-phosphocholine = a 1-acyl-sn-glycero-2,3-cyclic phosphate + choline. The catalysed reaction is a 1-acyl-sn-glycero-3-phosphoethanolamine = a 1-acyl-sn-glycero-2,3-cyclic phosphate + ethanolamine. In terms of biological role, dermonecrotic toxins cleave the phosphodiester linkage between the phosphate and headgroup of certain phospholipids (sphingolipid and lysolipid substrates), forming an alcohol (often choline) and a cyclic phosphate. This toxin acts on sphingomyelin (SM). It may also act on ceramide phosphoethanolamine (CPE), lysophosphatidylcholine (LPC) and lysophosphatidylethanolamine (LPE), but not on lysophosphatidylserine (LPS), and lysophosphatidylglycerol (LPG). It acts by transphosphatidylation, releasing exclusively cyclic phosphate products as second products. Induces dermonecrosis, hemolysis, increased vascular permeability, edema, inflammatory response, and platelet aggregation. This Loxosceles laeta (South American recluse spider) protein is Dermonecrotic toxin LlSicTox-alphaIII3ii.